The sequence spans 421 residues: CinA-like protein (421 aa).

This sequence belongs to the CinA family.

The polypeptide is CinA-like protein (Mycobacterium sp. (strain JLS)).